Reading from the N-terminus, the 213-residue chain is dTTP/UTP pyrophosphatase (213 aa).

Asp92 (proton acceptor) is an active-site residue.

This sequence belongs to the Maf family. YhdE subfamily. A divalent metal cation is required as a cofactor.

The protein localises to the cytoplasm. The catalysed reaction is dTTP + H2O = dTMP + diphosphate + H(+). The enzyme catalyses UTP + H2O = UMP + diphosphate + H(+). Its function is as follows. Nucleoside triphosphate pyrophosphatase that hydrolyzes dTTP and UTP. May have a dual role in cell division arrest and in preventing the incorporation of modified nucleotides into cellular nucleic acids. The chain is dTTP/UTP pyrophosphatase from Granulibacter bethesdensis (strain ATCC BAA-1260 / CGDNIH1).